A 591-amino-acid chain; its full sequence is MAERTHACGKVTVEAVGQTVQLKGWVQKRRDLGGLIFIDLRDRTGIVQVVFNPETSKEALEVAETIRSEYVLHVEGTVVERGEGAINDNMATGRIEVQATKVNVLNAAKTTPIIIADDTDASEDVRLKYRYLDLRRPVMFNTFKMRHDVTKTIRNFLDTEEFLEVETPILTKSTPEGARDYLVPSRVHDGEFYALPQSPQLFKQLLMVGGFERYYQVARCFRDEDLRADRQPEFTQIDIEASFLTQEEILDMMERMMTKVMKDAKGVEISAPFPRMTYADAMARYGSDKPDTRFEMELTDLSEFAAGCGFKVFTSAVESGGQVKAINAKGAASKYSRKDIDALTEFVKVYGAKGLAWLKVEEDGLKGPIAKFFGEEDANVLMTTLEATAGDLLLFVADKKSVVADSLGALRLRLGKELELIDESKYNFLWVTDWPLLEYDEDADRYFAAHHPFTMPFREDVELLETAPEKARAQAYDLVLNGYELGGGSLRIYERDVQEKMFKALGFSQEEAQEQFGFLLEAFEYGTPPHGGIALGLDRLVMLLAGRTNLRDTIAFPKTASASCLLTEAPSPVAEAQLEELNLKLSLKEEK.

Glu-176 serves as a coordination point for L-aspartate. An aspartate region spans residues 200–203 (QLFK). Arg-222 is an L-aspartate binding site. Residues 222-224 (RDE) and Gln-231 each bind ATP. Residue His-450 participates in L-aspartate binding. Glu-484 lines the ATP pocket. L-aspartate is bound at residue Arg-491. 536 to 539 (GLDR) lines the ATP pocket.

The protein belongs to the class-II aminoacyl-tRNA synthetase family. Type 1 subfamily. In terms of assembly, homodimer.

The protein localises to the cytoplasm. It carries out the reaction tRNA(Asx) + L-aspartate + ATP = L-aspartyl-tRNA(Asx) + AMP + diphosphate. Functionally, aspartyl-tRNA synthetase with relaxed tRNA specificity since it is able to aspartylate not only its cognate tRNA(Asp) but also tRNA(Asn). Reaction proceeds in two steps: L-aspartate is first activated by ATP to form Asp-AMP and then transferred to the acceptor end of tRNA(Asp/Asn). The sequence is that of Aspartate--tRNA(Asp/Asn) ligase from Bacillus cereus (strain ATCC 10987 / NRS 248).